We begin with the raw amino-acid sequence, 95 residues long: Co-chaperonin GroES (95 aa).

Belongs to the GroES chaperonin family. Heptamer of 7 subunits arranged in a ring. Interacts with the chaperonin GroEL.

It is found in the cytoplasm. Functionally, together with the chaperonin GroEL, plays an essential role in assisting protein folding. The GroEL-GroES system forms a nano-cage that allows encapsulation of the non-native substrate proteins and provides a physical environment optimized to promote and accelerate protein folding. GroES binds to the apical surface of the GroEL ring, thereby capping the opening of the GroEL channel. In Alkalilimnicola ehrlichii (strain ATCC BAA-1101 / DSM 17681 / MLHE-1), this protein is Co-chaperonin GroES.